A 252-amino-acid polypeptide reads, in one-letter code: Imidazole glycerol phosphate synthase subunit HisF (252 aa).

Residues D11 and D130 contribute to the active site.

Belongs to the HisA/HisF family. Heterodimer of HisH and HisF.

The protein resides in the cytoplasm. It catalyses the reaction 5-[(5-phospho-1-deoxy-D-ribulos-1-ylimino)methylamino]-1-(5-phospho-beta-D-ribosyl)imidazole-4-carboxamide + L-glutamine = D-erythro-1-(imidazol-4-yl)glycerol 3-phosphate + 5-amino-1-(5-phospho-beta-D-ribosyl)imidazole-4-carboxamide + L-glutamate + H(+). Its pathway is amino-acid biosynthesis; L-histidine biosynthesis; L-histidine from 5-phospho-alpha-D-ribose 1-diphosphate: step 5/9. IGPS catalyzes the conversion of PRFAR and glutamine to IGP, AICAR and glutamate. The HisF subunit catalyzes the cyclization activity that produces IGP and AICAR from PRFAR using the ammonia provided by the HisH subunit. The sequence is that of Imidazole glycerol phosphate synthase subunit HisF from Bacillus licheniformis (strain ATCC 14580 / DSM 13 / JCM 2505 / CCUG 7422 / NBRC 12200 / NCIMB 9375 / NCTC 10341 / NRRL NRS-1264 / Gibson 46).